The sequence spans 331 residues: Ketol-acid reductoisomerase (NADP(+)) (331 aa).

The KARI N-terminal Rossmann domain occupies 4–183 (ATIYYDDDAE…GCTRAGVVET (180 aa)). Residues 27–30 (YGSQ), Arg50, Ser53, Ser55, and 85–88 (DTVQ) each bind NADP(+). The active site involves His109. Gly135 lines the NADP(+) pocket. One can recognise a KARI C-terminal knotted domain in the interval 184–329 (TFREETETDL…EDLRALFAWG (146 aa)). Mg(2+) contacts are provided by Asp192, Glu196, Glu228, and Glu232. Substrate is bound at residue Ser253.

The protein belongs to the ketol-acid reductoisomerase family. Mg(2+) is required as a cofactor.

The catalysed reaction is (2R)-2,3-dihydroxy-3-methylbutanoate + NADP(+) = (2S)-2-acetolactate + NADPH + H(+). It carries out the reaction (2R,3R)-2,3-dihydroxy-3-methylpentanoate + NADP(+) = (S)-2-ethyl-2-hydroxy-3-oxobutanoate + NADPH + H(+). The protein operates within amino-acid biosynthesis; L-isoleucine biosynthesis; L-isoleucine from 2-oxobutanoate: step 2/4. Its pathway is amino-acid biosynthesis; L-valine biosynthesis; L-valine from pyruvate: step 2/4. Involved in the biosynthesis of branched-chain amino acids (BCAA). Catalyzes an alkyl-migration followed by a ketol-acid reduction of (S)-2-acetolactate (S2AL) to yield (R)-2,3-dihydroxy-isovalerate. In the isomerase reaction, S2AL is rearranged via a Mg-dependent methyl migration to produce 3-hydroxy-3-methyl-2-ketobutyrate (HMKB). In the reductase reaction, this 2-ketoacid undergoes a metal-dependent reduction by NADPH to yield (R)-2,3-dihydroxy-isovalerate. The protein is Ketol-acid reductoisomerase (NADP(+)) of Natronomonas pharaonis (strain ATCC 35678 / DSM 2160 / CIP 103997 / JCM 8858 / NBRC 14720 / NCIMB 2260 / Gabara) (Halobacterium pharaonis).